We begin with the raw amino-acid sequence, 462 residues long: Jasmonoyl--L-amino acid synthetase GH3.3 (462 aa).

S103 contacts ATP. S106 provides a ligand contact to jasmonate. ATP is bound by residues T126, N172, and 337-342 (GASEGW). 170-174 (TTNVY) contacts an L-alpha-amino acid. Jasmonate contacts are provided by residues 334-337 (AEYG) and S339.

This sequence belongs to the IAA-amido conjugating enzyme family. Expressed in green shoots and flowers.

It catalyses the reaction a jasmonate + an L-alpha-amino acid + ATP = a jasmonyl-L-amino acid + AMP + diphosphate + H(+). Functionally, catalyzes the synthesis of jasmonate-amino acid conjugates by adenylation. Catalyzes the conjugation of jasmonate (JA) to Ile when expressed in a heterologous system (E.coli). Catalyzes in vitro the conjugation of jasmonate (JA) to Ile, Phe, Leu, Met, Val and Trp. May catalyze the synthesis of indole-3-acetic acid (IAA)-amino acid conjugates, providing a mechanism for the plant to cope with the presence of excess auxin. This chain is Jasmonoyl--L-amino acid synthetase GH3.3, found in Oryza sativa subsp. japonica (Rice).